Consider the following 138-residue polypeptide: ATP synthase epsilon chain (138 aa).

It belongs to the ATPase epsilon chain family. In terms of assembly, F-type ATPases have 2 components, CF(1) - the catalytic core - and CF(0) - the membrane proton channel. CF(1) has five subunits: alpha(3), beta(3), gamma(1), delta(1), epsilon(1). CF(0) has three main subunits: a, b and c.

Its subcellular location is the cell membrane. Functionally, produces ATP from ADP in the presence of a proton gradient across the membrane. This Buchnera aphidicola subsp. Acyrthosiphon pisum (strain APS) (Acyrthosiphon pisum symbiotic bacterium) protein is ATP synthase epsilon chain (atpC).